A 261-amino-acid chain; its full sequence is MAEKLPAPLLALFAPRPPLRYLPPMDVPPEKRSTPRVSGIAKYLKYAQSHDQQYHPTESLEEKRLRLRDEKQKQQRERLRSMIKVWDPDHDRHVIGDPYKTMFLSRLSYDTKESDIEREFTRYGPIERIRVVRNKVTGKSMGYAFVVFERERDLKVAYKASAGLMLNGRRIVVDVERGRTVKGWLPRKLGGGLGGRHYTKERPRRERGSRFRGDSGFRGGYRGGFRKSSGGGSRFGRGPTRSSHSSDYGGRDSSPKRRRYN.

An RRM domain is found at 100–178 (KTMFLSRLSY…RRIVVDVERG (79 aa)). Residues 192–261 (GLGGRHYTKE…DSSPKRRRYN (70 aa)) form a disordered region. Positions 198 to 215 (YTKERPRRERGSRFRGDS) are enriched in basic and acidic residues. Residues 216-235 (GFRGGYRGGFRKSSGGGSRF) are compositionally biased toward gly residues.

Component of the spliceosome, where it is associated with snRNP U1. Associates with U1 snRNA.

It is found in the nucleus. Functionally, involved in nuclear mRNA splicing. Essential for growth. In Schizosaccharomyces pombe (strain 972 / ATCC 24843) (Fission yeast), this protein is U1 small nuclear ribonucleoprotein 70 kDa homolog.